Reading from the N-terminus, the 427-residue chain is Peptidase B (427 aa).

Mn(2+) contacts are provided by lysine 195 and aspartate 200. Lysine 207 is an active-site residue. Positions 218, 277, and 279 each coordinate Mn(2+). Residue arginine 281 is part of the active site.

This sequence belongs to the peptidase M17 family. As to quaternary structure, homohexamer. Mn(2+) serves as cofactor.

It is found in the cytoplasm. It carries out the reaction Release of an N-terminal amino acid, Xaa, from a peptide or arylamide. Xaa is preferably Glu or Asp but may be other amino acids, including Leu, Met, His, Cys and Gln.. In terms of biological role, probably plays an important role in intracellular peptide degradation. This Escherichia coli (strain ATCC 8739 / DSM 1576 / NBRC 3972 / NCIMB 8545 / WDCM 00012 / Crooks) protein is Peptidase B.